The primary structure comprises 338 residues: 4-hydroxythreonine-4-phosphate dehydrogenase (338 aa).

Residues His-139 and Thr-140 each contribute to the substrate site. 3 residues coordinate a divalent metal cation: His-169, His-214, and His-270. Residues Lys-278, Asn-287, and Arg-296 each contribute to the substrate site.

This sequence belongs to the PdxA family. Homodimer. Zn(2+) is required as a cofactor. Requires Mg(2+) as cofactor. The cofactor is Co(2+).

The protein localises to the cytoplasm. The catalysed reaction is 4-(phosphooxy)-L-threonine + NAD(+) = 3-amino-2-oxopropyl phosphate + CO2 + NADH. It functions in the pathway cofactor biosynthesis; pyridoxine 5'-phosphate biosynthesis; pyridoxine 5'-phosphate from D-erythrose 4-phosphate: step 4/5. Catalyzes the NAD(P)-dependent oxidation of 4-(phosphooxy)-L-threonine (HTP) into 2-amino-3-oxo-4-(phosphooxy)butyric acid which spontaneously decarboxylates to form 3-amino-2-oxopropyl phosphate (AHAP). The polypeptide is 4-hydroxythreonine-4-phosphate dehydrogenase (Desulfosudis oleivorans (strain DSM 6200 / JCM 39069 / Hxd3) (Desulfococcus oleovorans)).